Reading from the N-terminus, the 242-residue chain is MIIEIITIFPLFFKSFCETSIIKRALEQKKVQIKLHDLRTYSKNKHNQVDDSVYGGGVGMLLSFPPFFDCLQKIKTPQSKVILLSPQGKIFNQIHATNFAQKETHLIILCGNYEGVDARILQYIDAEISIGDYVLTGGEIAATVLVDAITRLLPEVIKEQSFLEDSHQQGLLKHPQYTRPQSYLNHEVPAVLLSGNHAKIRCWRQKESLKATLQKRPDLLENKKLTLEQTKLLTEIKQELQK.

S-adenosyl-L-methionine contacts are provided by residues G111 and 130–135 (IGDYVL).

This sequence belongs to the RNA methyltransferase TrmD family. As to quaternary structure, homodimer.

The protein resides in the cytoplasm. It catalyses the reaction guanosine(37) in tRNA + S-adenosyl-L-methionine = N(1)-methylguanosine(37) in tRNA + S-adenosyl-L-homocysteine + H(+). Functionally, specifically methylates guanosine-37 in various tRNAs. The protein is tRNA (guanine-N(1)-)-methyltransferase of Onion yellows phytoplasma (strain OY-M).